A 274-amino-acid chain; its full sequence is Oxidized low-density lipoprotein receptor 1 (274 aa).

The disordered stretch occupies residues 1 to 28; that stretch reads MTLDDLKSNSMKDQPDEKSNGDKAEGPR. Over 1–37 the chain is Cytoplasmic; that stretch reads MTLDDLKSNSMKDQPDEKSNGDKAEGPRSLSTLRWRP. Over residues 13 to 26 the composition is skewed to basic and acidic residues; it reads DQPDEKSNGDKAEG. The chain crosses the membrane as a helical; Signal-anchor for type II membrane protein span at residues 38-60; the sequence is AALILGLLCLGLLVTVILLIIQL. C46 is lipidated: S-palmitoyl cysteine. The interval 61–150 is neck; the sequence is SQVSDLLKQQ…SGPCPQDWLW (90 aa). Residues 61-274 are Extracellular-facing; that stretch reads SQVSDLLKQQ…QKRANLLRAQ (214 aa). A coiled-coil region spans residues 89-142; the sequence is RQAEKSSQESQRELTEMIETLAHKLDEKSKKLMELQQQNLNLQKALEKAANFSG. N-linked (GlcNAc...) asparagine glycosylation is present at N139. 3 cysteine pairs are disulfide-bonded: C144-C155, C172-C264, and C243-C256. Residues 151-265 enclose the C-type lectin domain; the sequence is HEENCYKFSS…CILNAFSICQ (115 aa).

In terms of assembly, homodimer; disulfide-linked. May form a hexamer composed of 3 homodimers. Interacts with HSP70. In terms of processing, N-glycosylated.

The protein resides in the cell membrane. The protein localises to the membrane raft. It localises to the secreted. Functionally, receptor that mediates the recognition, internalization and degradation of oxidatively modified low density lipoprotein (oxLDL) by vascular endothelial cells. OxLDL is a marker of atherosclerosis that induces vascular endothelial cell activation and dysfunction, resulting in pro-inflammatory responses, pro-oxidative conditions and apoptosis. Its association with oxLDL induces the activation of NF-kappa-B through an increased production of intracellular reactive oxygen and a variety of pro-atherogenic cellular responses including a reduction of nitric oxide (NO) release, monocyte adhesion and apoptosis. In addition to binding oxLDL, it acts as a receptor for the HSP70 protein involved in antigen cross-presentation to naive T-cells in dendritic cells, thereby participating in cell-mediated antigen cross-presentation. Also involved in inflammatory process, by acting as a leukocyte-adhesion molecule at the vascular interface in endotoxin-induced inflammation. Also acts as a receptor for advanced glycation end (AGE) products, activated platelets, monocytes, apoptotic cells and both Gram-negative and Gram-positive bacteria. In Sus scrofa (Pig), this protein is Oxidized low-density lipoprotein receptor 1 (OLR1).